We begin with the raw amino-acid sequence, 352 residues long: GTPase Obg (352 aa).

Positions 1 to 159 (MHFLDQAKIF…MYVWLRLKLL (159 aa)) constitute an Obg domain. Residues 122–142 (DGGRGNASYKTSTNRAPRQHG) are disordered. Residues 160 to 328 (ADAGLVGLPN…LLDAVLEYLP (169 aa)) enclose the OBG-type G domain. GTP is bound by residues 166–173 (GLPNAGKS), 191–195 (FTTLR), 212–215 (DIPG), 280–283 (NKID), and 309–311 (SGA). Residues Ser-173 and Thr-193 each contribute to the Mg(2+) site.

It belongs to the TRAFAC class OBG-HflX-like GTPase superfamily. OBG GTPase family. In terms of assembly, monomer. Mg(2+) serves as cofactor.

The protein localises to the cytoplasm. Functionally, an essential GTPase which binds GTP, GDP and possibly (p)ppGpp with moderate affinity, with high nucleotide exchange rates and a fairly low GTP hydrolysis rate. Plays a role in control of the cell cycle, stress response, ribosome biogenesis and in those bacteria that undergo differentiation, in morphogenesis control. This Novosphingobium aromaticivorans (strain ATCC 700278 / DSM 12444 / CCUG 56034 / CIP 105152 / NBRC 16084 / F199) protein is GTPase Obg.